We begin with the raw amino-acid sequence, 616 residues long: Chaperone protein HscA (616 aa).

It belongs to the heat shock protein 70 family.

In terms of biological role, chaperone involved in the maturation of iron-sulfur cluster-containing proteins. Has a low intrinsic ATPase activity which is markedly stimulated by HscB. Involved in the maturation of IscU. This Yersinia enterocolitica serotype O:8 / biotype 1B (strain NCTC 13174 / 8081) protein is Chaperone protein HscA.